A 146-amino-acid polypeptide reads, in one-letter code: Large ribosomal subunit protein uL11 (146 aa).

The protein belongs to the universal ribosomal protein uL11 family. As to quaternary structure, part of the ribosomal stalk of the 50S ribosomal subunit. Interacts with L10 and the large rRNA to form the base of the stalk. L10 forms an elongated spine to which L12 dimers bind in a sequential fashion forming a multimeric L10(L12)X complex. In terms of processing, one or more lysine residues are methylated.

Forms part of the ribosomal stalk which helps the ribosome interact with GTP-bound translation factors. The polypeptide is Large ribosomal subunit protein uL11 (Buchnera aphidicola subsp. Baizongia pistaciae (strain Bp)).